The chain runs to 147 residues: Large ribosomal subunit protein bL9 (147 aa).

The protein belongs to the bacterial ribosomal protein bL9 family.

Binds to the 23S rRNA. The chain is Large ribosomal subunit protein bL9 from Campylobacter fetus subsp. fetus (strain 82-40).